A 412-amino-acid chain; its full sequence is Serine hydroxymethyltransferase (412 aa).

Residues leucine 117 and 121-123 (GHL) contribute to the (6S)-5,6,7,8-tetrahydrofolate site. N6-(pyridoxal phosphate)lysine is present on lysine 226. 349–351 (SPF) lines the (6S)-5,6,7,8-tetrahydrofolate pocket.

The protein belongs to the SHMT family. In terms of assembly, homodimer. Requires pyridoxal 5'-phosphate as cofactor.

Its subcellular location is the cytoplasm. The enzyme catalyses (6R)-5,10-methylene-5,6,7,8-tetrahydrofolate + glycine + H2O = (6S)-5,6,7,8-tetrahydrofolate + L-serine. It participates in one-carbon metabolism; tetrahydrofolate interconversion. It functions in the pathway amino-acid biosynthesis; glycine biosynthesis; glycine from L-serine: step 1/1. Catalyzes the reversible interconversion of serine and glycine with tetrahydrofolate (THF) serving as the one-carbon carrier. This reaction serves as the major source of one-carbon groups required for the biosynthesis of purines, thymidylate, methionine, and other important biomolecules. Also exhibits THF-independent aldolase activity toward beta-hydroxyamino acids, producing glycine and aldehydes, via a retro-aldol mechanism. The sequence is that of Serine hydroxymethyltransferase from Nitratidesulfovibrio vulgaris (strain ATCC 29579 / DSM 644 / CCUG 34227 / NCIMB 8303 / VKM B-1760 / Hildenborough) (Desulfovibrio vulgaris).